Here is a 117-residue protein sequence, read N- to C-terminus: DNA-directed RNA polymerase II subunit RPB11 (117 aa).

Met-1 carries the N-acetylmethionine modification.

This sequence belongs to the archaeal Rpo11/eukaryotic RPB11/RPC19 RNA polymerase subunit family. As to quaternary structure, component of the RNA polymerase II (Pol II) core complex consisting of 12 subunits: a ten-subunit catalytic core composed of POLR2A/RPB1, POLR2B/RPB2, POLR2C/RPB3, POLR2I/RPB9, POLR2J/RPB11, POLR2E/RPABC1, POLR2F/RPABC2, POLR2H/RPABC3, POLR2K/RPABC4 and POLR2L/RPABC5 and a mobile stalk composed of two subunits POLR2D/RPB4 and POLR2G/RPB7, protruding from the core and functioning primarily in transcription initiation. Part of Pol II(G) complex, in which Pol II core associates with an additional subunit POLR2M; unlike conventional Pol II, Pol II(G) functions as a transcriptional repressor. Part of TBP-based Pol II pre-initiation complex (PIC), in which Pol II core assembles with general transcription factors and other specific initiation factors including GTF2E1, GTF2E2, GTF2F1, GTF2F2, TCEA1, ERCC2, ERCC3, GTF2H2, GTF2H3, GTF2H4, GTF2H5, GTF2A1, GTF2A2, GTF2B and TBP; this large multi-subunit PIC complex mediates DNA unwinding and targets Pol II core to the transcription start site where the first phosphodiester bond forms. Interacts with PTPN6; this interaction promotes the recruitment of RNA pol II to the PCK1 promoter.

It is found in the nucleus. In terms of biological role, DNA-dependent RNA polymerase catalyzes the transcription of DNA into RNA using the four ribonucleoside triphosphates as substrates. Component of RNA polymerase II which synthesizes mRNA precursors and many functional non-coding RNAs. Pol II is the central component of the basal RNA polymerase II transcription machinery. It is composed of mobile elements that move relative to each other. POLR2J/RPB11 is part of the core element with the central large cleft. This chain is DNA-directed RNA polymerase II subunit RPB11 (POLR2J), found in Bos taurus (Bovine).